The following is a 1103-amino-acid chain: PH, RCC1 and FYVE domains-containing protein 1 (1103 aa).

In terms of domain architecture, PH spans 22 to 123; the sequence is KKGTQLLKYG…IWIGGLKTLI (102 aa). The disordered stretch occupies residues 144–233; the sequence is DASRELTSSS…SSSHGSAADD (90 aa). 2 stretches are compositionally biased toward low complexity: residues 151–169 and 217–231; these read SSSP…SSPG and SVSS…GSAA. 7 RCC1 repeats span residues 237–298, 299–351, 353–406, 407–458, 471–522, 524–574, and 575–626; these read LGDV…FVTR, QGEI…AVTL, GELY…LITS, YGRL…AVVE, SGKL…GLTT, GQVF…ALTS, and RNEV…AICL. An FYVE-type zinc finger spans residues 632 to 694; that stretch reads GAEQSQCSTC…VCDSCYVKLS (63 aa). Zn(2+) contacts are provided by C638, C641, C654, C657, C662, C665, C686, and C689. The tract at residues 783–818 is disordered; that stretch reads ATPKLAQAPSGISSRSVSPFSRRSSPPRSATPMPST. The span at 791–818 shows a compositional bias: low complexity; the sequence is PSGISSRSVSPFSRRSSPPRSATPMPST. Residues 828–904 adopt a coiled-coil conformation; it reads ADNMKKTNEI…IAQLKDVAEK (77 aa). The segment covering 962–979 has biased composition (polar residues); sequence NLQSPKQTPRASERNSNA. Residues 962–988 form a disordered region; it reads NLQSPKQTPRASERNSNAYPADPRLSS. The BRX domain occupies 1023 to 1078; that stretch reads AEWIEQYEPGVYITLVALHDGTRDLRRVRFSRRRFGEHQAETWWSENREKVYEKYN. Residues 1079–1103 form a disordered region; it reads VRVSEKSTASQTHRDRDEEEEDIPH.

As to expression, mostly expressed in flowers, and, to a lower extent, in stems, leaves, siliques, seeds.

Binds to phosphatidic acid and to phosphoinositides such as PtdIns3P, PtdIns(3,4)P(2), PtdIns(3,4,5)P(3) and PtdIns(4,5)P(2). Catalyzes guanine nucleotide exchange on specific Rab proteins. This is PH, RCC1 and FYVE domains-containing protein 1 from Arabidopsis thaliana (Mouse-ear cress).